The following is a 378-amino-acid chain: Long-chain-fatty-acid--luciferin-component ligase (378 aa).

Belongs to the LuxE family.

The catalysed reaction is a long-chain fatty acid + L-cysteinyl-[protein] + ATP = an S-(long-chain fatty acyl)-L-cysteinyl-[protein] + AMP + diphosphate. The protein operates within lipid metabolism; fatty acid reduction for biolumincescence. Acyl-protein synthetase activates tetradecanoic acid. It is a component of the fatty acid reductase complex responsible for converting tetradecanoic acid to the aldehyde which serves as substrate in the luciferase-catalyzed reaction. In Aliivibrio fischeri (Vibrio fischeri), this protein is Long-chain-fatty-acid--luciferin-component ligase.